The sequence spans 288 residues: Nucleotide-binding protein Tola_2941 (288 aa).

8–15 (GRSGSGKT) contacts ATP. 56-59 (DVRN) contributes to the GTP binding site.

The protein belongs to the RapZ-like family.

Displays ATPase and GTPase activities. The chain is Nucleotide-binding protein Tola_2941 from Tolumonas auensis (strain DSM 9187 / NBRC 110442 / TA 4).